Consider the following 898-residue polypeptide: Alanine--tRNA ligase (898 aa).

Residues histidine 564, histidine 568, cysteine 682, and histidine 686 each coordinate Zn(2+).

This sequence belongs to the class-II aminoacyl-tRNA synthetase family. Zn(2+) is required as a cofactor.

It is found in the cytoplasm. The enzyme catalyses tRNA(Ala) + L-alanine + ATP = L-alanyl-tRNA(Ala) + AMP + diphosphate. Functionally, catalyzes the attachment of alanine to tRNA(Ala) in a two-step reaction: alanine is first activated by ATP to form Ala-AMP and then transferred to the acceptor end of tRNA(Ala). Also edits incorrectly charged Ser-tRNA(Ala) and Gly-tRNA(Ala) via its editing domain. In Beijerinckia indica subsp. indica (strain ATCC 9039 / DSM 1715 / NCIMB 8712), this protein is Alanine--tRNA ligase.